We begin with the raw amino-acid sequence, 67 residues long: Probable Sec-independent protein translocase protein TatE (67 aa).

The helical transmembrane segment at 4–21 (ISITKLLVVAALVVLLFG) threads the bilayer. The disordered stretch occupies residues 46–67 (EDAGAKKEAGGDIQAEKLSHKE).

This sequence belongs to the TatA/E family. TatE subfamily.

It localises to the cell inner membrane. Its function is as follows. Part of the twin-arginine translocation (Tat) system that transports large folded proteins containing a characteristic twin-arginine motif in their signal peptide across membranes. TatE shares overlapping functions with TatA. This is Probable Sec-independent protein translocase protein TatE from Citrobacter koseri (strain ATCC BAA-895 / CDC 4225-83 / SGSC4696).